Consider the following 1383-residue polypeptide: DNA-directed RNA polymerase subunit beta (1383 aa).

This sequence belongs to the RNA polymerase beta chain family. In terms of assembly, the RNAP catalytic core consists of 2 alpha, 1 beta, 1 beta' and 1 omega subunit. When a sigma factor is associated with the core the holoenzyme is formed, which can initiate transcription.

It catalyses the reaction RNA(n) + a ribonucleoside 5'-triphosphate = RNA(n+1) + diphosphate. Functionally, DNA-dependent RNA polymerase catalyzes the transcription of DNA into RNA using the four ribonucleoside triphosphates as substrates. The protein is DNA-directed RNA polymerase subunit beta of Bartonella bacilliformis (strain ATCC 35685 / KC583 / Herrer 020/F12,63).